Consider the following 440-residue polypeptide: Transposon Ty1-BL Gag polyprotein (440 aa).

Polar residues-rich tracts occupy residues 20-31 (SVTSKEVQTTQD), 46-55 (VSTQANSQQP), and 137-168 (VGTH…TNQH). Disordered regions lie at residues 20-84 (SVTS…QNGP), 137-173 (VGTH…RPPP), and 350-424 (QQES…TTEP). The RNA-binding stretch occupies residues 299-401 (NNGIPINNKV…NSQSRTARAH (103 aa)). Positions 363–372 (SPSDEKKDSR) are enriched in basic and acidic residues. Over residues 373–411 (TYTNTTKPKSITRNSQKPNNSQSRTARAHNVSTFNNSPG) the composition is skewed to polar residues.

As to quaternary structure, homotrimer.

It localises to the cytoplasm. Its function is as follows. Capsid protein (CA) is the structural component of the virus-like particle (VLP), forming the shell that encapsulates the retrotransposons dimeric RNA genome. The particles are assembled from trimer-clustered units and there are holes in the capsid shells that allow for the diffusion of macromolecules. CA also has nucleocapsid-like chaperone activity, promoting primer tRNA(i)-Met annealing to the multipartite primer-binding site (PBS), dimerization of Ty1 RNA and initiation of reverse transcription. This chain is Transposon Ty1-BL Gag polyprotein (TY1A-BL), found in Saccharomyces cerevisiae (strain ATCC 204508 / S288c) (Baker's yeast).